A 1183-amino-acid polypeptide reads, in one-letter code: Peroxisomal ATPase PEX6 (1183 aa).

Positions 161-205 are disordered; it reads ESRGKKTGEPEDGPLANGIDLNGVDDSDSDEDVLSQGDDDDENNV. The span at 183 to 204 shows a compositional bias: acidic residues; that stretch reads GVDDSDSDEDVLSQGDDDDENN. An AAA-cassette D1 region spans residues 576-785; sequence LPNNYISPVH…VERAMTACSE (210 aa). The interval 878-1070 is AAA-cassette D2; that stretch reads GILFYGPPGT…CSDAMLKAIT (193 aa). 883 to 890 provides a ligand contact to ATP; sequence GPPGTGKT. The tract at residues 1160-1183 is disordered; that stretch reads IMVDGPGTGGEGAFGDDGDEEGLY. Residues 1173 to 1183 show a composition bias toward acidic residues; it reads FGDDGDEEGLY.

It belongs to the AAA ATPase family. Interacts with PEX1; forming the PEX1-PEX6 AAA ATPase complex, which is composed of a heterohexamer formed by a trimer of PEX1-PEX6 dimers.

The protein resides in the cytoplasm. Its subcellular location is the cytosol. It is found in the peroxisome membrane. It catalyses the reaction ATP + H2O = ADP + phosphate + H(+). In terms of biological role, component of the PEX1-PEX6 AAA ATPase complex, a protein dislocase complex that mediates the ATP-dependent extraction of the PEX5 receptor from peroxisomal membranes, an essential step for PEX5 recycling. Specifically recognizes PEX5 monoubiquitinated at 'Cys-6', and pulls it out of the peroxisome lumen through the PEX2-PEX10-PEX12 retrotranslocation channel. Extraction by the PEX1-PEX6 AAA ATPase complex is accompanied by unfolding of the TPR repeats and release of bound cargo from PEX5. Regulates autophagy and biogenesis of peroxisomes and Woronin bodies. Plays important roles in mycelial growth and development and stress response. Is also essential for conidiation and fatty acid utilization. Required for nematode predation via trap formation. The chain is Peroxisomal ATPase PEX6 from Arthrobotrys oligospora (strain ATCC 24927 / CBS 115.81 / DSM 1491) (Nematode-trapping fungus).